A 194-amino-acid polypeptide reads, in one-letter code: Probable GTP-binding protein EngB (194 aa).

Positions 22 to 194 (PLPEVALAGR…AWKAILHAIS (173 aa)) constitute an EngB-type G domain. GTP is bound by residues 30 to 37 (GRSNVGKS), 57 to 61 (GKTQT), 75 to 78 (DVPG), 142 to 145 (TKCD), and 174 to 176 (FSS). 2 residues coordinate Mg(2+): S37 and T59.

The protein belongs to the TRAFAC class TrmE-Era-EngA-EngB-Septin-like GTPase superfamily. EngB GTPase family. Mg(2+) serves as cofactor.

In terms of biological role, necessary for normal cell division and for the maintenance of normal septation. This Halalkalibacterium halodurans (strain ATCC BAA-125 / DSM 18197 / FERM 7344 / JCM 9153 / C-125) (Bacillus halodurans) protein is Probable GTP-binding protein EngB.